Here is a 675-residue protein sequence, read N- to C-terminus: Collagen alpha-3(IX) chain (675 aa).

The signal sequence occupies residues 1–21 (MTVFPTLGLLFLCQLLATTSA). Disordered stretches follow at residues 22–517 (QRVG…KEAS) and 542–660 (KPLS…ICDT). Residues 25 to 515 (GPQGPPGPRG…TGKPGPPGKE (491 aa)) are triple-helical region 3 (COL3). Pro residues-rich tracts occupy residues 27–38 (QGPPGPRGPPGP) and 51–60 (SGLPGPPGPK). Residues 62–87 (APGKPGAAGEAGLPGLPGVDGLTGTD) show a composition bias toward low complexity. Residues 105–125 (AGPPGPAGKGLPGPPGPPGPS) are compositionally biased toward pro residues. Residues 126–135 (GLPGGNGFRG) show a composition bias toward gly residues. Composition is skewed to pro residues over residues 136-155 (PPGP…PGPP) and 173-184 (LCPPGPPGPPGM). Residues 218–233 (PGSVGLQGPRGLRGLP) are compositionally biased toward low complexity. A Cell attachment site motif is present at residues 242–244 (RGD). Residues 301–317 (KDGRDGAPGLDGEKGDA) are compositionally biased toward basic and acidic residues. Over residues 361–374 (EPGIPGDVGIPGDR) the composition is skewed to low complexity. A glycan (N-linked (GlcNAc...) asparagine) is linked at Asn479. The span at 481–508 (TAGAPGIPGHPGPMGHQGEQGVPGITGK) shows a compositional bias: low complexity. Residues 516–546 (ASEQHIRELCGEMINDQIAQLAANLRKPLSP) form a nonhelical region 3 (NC3) region. A triple-helical region 2 (COL2) region spans residues 547 to 626 (GMTGRPGPAG…QGLPGVPGIS (80 aa)). Residues 569–582 (HPGARGPPGYRGPT) are compositionally biased toward low complexity. The short motif at 591-593 (RGD) is the Cell attachment site element. The span at 613-624 (DQGPQGLPGVPG) shows a compositional bias: low complexity. The segment at 627-631 (KNGRD) is nonhelical region 2 (NC2). The interval 632–658 (GAQGEPGLPGDPGTPGAVGAQGTPGIC) is triple-helical region 1 (COL1). Residues 659–675 (DTSACMGAVGASTSKKS) are nonhelical region 1 (NC1).

Belongs to the fibril-associated collagens with interrupted helices (FACIT) family. Trimers composed of three different chains: alpha 1(IX), alpha 2(IX), and alpha 3(IX). Post-translationally, prolines at the third position of the tripeptide repeating unit (G-X-Y) are hydroxylated in some or all of the chains.

It is found in the secreted. Its subcellular location is the extracellular space. The protein localises to the extracellular matrix. Collagen type IX is a minor cartilage non-fibrillar collagen. It is associated with type II collagen fibrils. The protein is Collagen alpha-3(IX) chain (COL9A3) of Gallus gallus (Chicken).